A 609-amino-acid polypeptide reads, in one-letter code: X-ray repair cross-complementing protein 6 (609 aa).

A disordered region spans residues 1-28 (MSGWESYYKTEGDEEAEEEQEENLEASG). Position 2 is an N-acetylserine (S2). At S2 the chain carries Phosphoserine. The residue at position 6 (S6) is a Phosphoserine; by PRKDC. Acidic residues predominate over residues 12–24 (GDEEAEEEQEENL). A Phosphoserine modification is found at S27. The active-site Schiff-base intermediate with DNA; for 5'-deoxyribose-5-phosphate lyase activity is K31. K31 carries the N6-acetyllysine modification. S51 is modified (phosphoserine; by PRKDC). The 208-residue stretch at 261–468 (LKLNKDIVIS…VGKMKAIVEK (208 aa)) folds into the Ku domain. The interval 277-341 (VQKALKPPPI…EETEELKRFD (65 aa)) is DNA-binding. Residue K287 forms a Glycyl lysine isopeptide (Lys-Gly) (interchain with G-Cter in SUMO2) linkage. S306 is modified (phosphoserine). N6-acetyllysine occurs at positions 317, 331, and 338. Residue K317 forms a Glycyl lysine isopeptide (Lys-Gly) (interchain with G-Cter in SUMO2) linkage. An interaction with XRCC5 region spans residues 373–482 (SLVIGSSTLF…YRSDSFENPV (110 aa)). T455 carries the post-translational modification Phosphothreonine. K461 bears the N6-acetyllysine mark. Phosphoserine occurs at positions 477 and 520. The segment at 536–562 (PEGKVTKRKHDNEGSGSKRPKVEYSEE) is disordered. 3 positions are modified to N6-acetyllysine: K539, K542, and K544. S550 bears the Phosphoserine mark. The interaction with DEAF1 stretch occupies residues 550 to 609 (SGSKRPKVEYSEEELKTHISKGTLGKFTVPMLKEACRAYGLKSGLKKQELLEALTKHFQD). K553 and K556 each carry N6-acetyllysine. K556 is covalently cross-linked (Glycyl lysine isopeptide (Lys-Gly) (interchain with G-Cter in SUMO2)). S560 carries the phosphoserine modification. K570 is subject to N6,N6,N6-trimethyllysine. Residues 573 to 607 (LGKFTVPMLKEACRAYGLKSGLKKQELLEALTKHF) enclose the SAP domain. The tract at residues 578 to 583 (VPMLKE) is interaction with BAX.

This sequence belongs to the ku70 family. Forms a heterodimer with XRCC5/Ku80; heterodimerization stabilizes XRCC5 protein. Component of the core long-range non-homologous end joining (NHEJ) complex (also named DNA-PK complex) composed of PRKDC, LIG4, XRCC4, XRCC6/Ku70, XRCC5/Ku86 and NHEJ1/XLF. Additional component of the NHEJ complex includes PAXX. Following autophosphorylation, PRKDC dissociates from DNA, leading to formation of the short-range NHEJ complex, composed of LIG4, XRCC4, XRCC6/Ku70, XRCC5/Ku86 and NHEJ1/XLF. The XRCC5-XRCC6 dimer also associates with NAA15, and this complex binds to the osteocalcin promoter and activates osteocalcin expression. In addition, XRCC6 interacts with the osteoblast-specific transcription factors MSX2, RUNX2 and DLX5. Interacts with ELF3. Interacts with ATP23. The XRCC5-XRRC6 dimer associates in a DNA-dependent manner with APEX1. Binds to CDK9 isoform 2. Identified in a complex with DEAF1 and XRCC5. Interacts with DEAF1 (via the SAND domain); the interaction is direct and may be inhibited by DNA-binding. Interacts with CLU. Interacts with NR4A3; the DNA-dependent protein kinase complex DNA-PK phosphorylates and activates NR4A3 and prevents NR4A3 ubiquitinylation and degradation. Interacts with CYREN isoform 1 (CYREN-1) and isoform 4 (CYREN-2) (via KBM motif). Interacts (via N-terminus) with HSF1 (via N-terminus); this interaction is direct and prevents XRCC5/XRCC6 heterodimeric binding and non-homologous end joining (NHEJ) repair activities induced by ionizing radiation (IR). Part of the HDP-RNP complex composed of at least HEXIM1, PRKDC, XRCC5, XRCC6, paraspeckle proteins (SFPQ, NONO, PSPC1, RBM14, and MATR3) and NEAT1 RNA. Interacts with HMBOX1. Interacts with ATF7. Interacts with APLF (via KBM motif). Interacts with WRN (via KBM motif). The XRCC5-XRCC6 dimer associates with ALKBH2. Interacts with TPRN; TPRN interacts with a number of DNA damage response proteins, is recruited to sites of DNA damage and may play a role in DNA damage repair. When not acetylated, interacts with BAX. Interacts with ERCC6L2. As to quaternary structure, (Microbial infection) Interacts with human T-cell leukemia virus 1/HTLV-1 protein HBZ. Post-translationally, phosphorylation by PRKDC may enhance helicase activity. Phosphorylation of Ser-51 does not affect DNA repair. ADP-ribosylated by PARP3. In terms of processing, methylation by SETD4 leads to accumulation in the cytoplasm and is a prerequisite for acetylation, possibly due to the change of subcellular from the nucleus to the cytosol initiated by methylation, acetylation occurring in the cytosol. Post-translationally, acetylation can be catalyzed in vitro by CREBBP/CBP and KAT2B/PCAF.

It is found in the nucleus. Its subcellular location is the chromosome. The protein resides in the cytoplasm. Single-stranded DNA-dependent ATP-dependent helicase that plays a key role in DNA non-homologous end joining (NHEJ) by recruiting DNA-PK to DNA. Required for double-strand break repair and V(D)J recombination. Also has a role in chromosome translocation. Has a role in chromosome translocation. The DNA helicase II complex binds preferentially to fork-like ends of double-stranded DNA in a cell cycle-dependent manner. It works in the 3'-5' direction. During NHEJ, the XRCC5-XRRC6 dimer performs the recognition step: it recognizes and binds to the broken ends of the DNA and protects them from further resection. Binding to DNA may be mediated by XRCC6. The XRCC5-XRRC6 dimer acts as a regulatory subunit of the DNA-dependent protein kinase complex DNA-PK by increasing the affinity of the catalytic subunit PRKDC to DNA by 100-fold. The XRCC5-XRRC6 dimer is probably involved in stabilizing broken DNA ends and bringing them together. The assembly of the DNA-PK complex to DNA ends is required for the NHEJ ligation step. Probably also acts as a 5'-deoxyribose-5-phosphate lyase (5'-dRP lyase), by catalyzing the beta-elimination of the 5' deoxyribose-5-phosphate at an abasic site near double-strand breaks. 5'-dRP lyase activity allows to 'clean' the termini of abasic sites, a class of nucleotide damage commonly associated with strand breaks, before such broken ends can be joined. The XRCC5-XRRC6 dimer together with APEX1 acts as a negative regulator of transcription. In association with NAA15, the XRCC5-XRRC6 dimer binds to the osteocalcin promoter and activates osteocalcin expression. Plays a role in the regulation of DNA virus-mediated innate immune response by assembling into the HDP-RNP complex, a complex that serves as a platform for IRF3 phosphorylation and subsequent innate immune response activation through the cGAS-STING pathway. Negatively regulates apoptosis by interacting with BAX and sequestering it from the mitochondria. Might have deubiquitination activity, acting on BAX. The chain is X-ray repair cross-complementing protein 6 (XRCC6) from Homo sapiens (Human).